Here is a 454-residue protein sequence, read N- to C-terminus: Apyrase (454 aa).

The Cytoplasmic portion of the chain corresponds to 1 to 7 (MLNQNSH). Residues 8–28 (FIFIILAIFLVLPLSLLSKNV) form a helical; Signal-anchor for type II membrane protein membrane-spanning segment. Residues 29-454 (NAQIPLRRHL…TTNKIRVASS (426 aa)) lie on the Extracellular side of the membrane. 48–58 (VIFDAGSTGSR) contacts ATP. A glycan (N-linked (GlcNAc...) asparagine) is linked at Asn-151. Residue Glu-170 is the Proton acceptor of the active site. 194-204 (ATIDLGGGSVQ) provides a ligand contact to ATP. Residue Asn-262 is glycosylated (N-linked (GlcNAc...) asparagine).

It belongs to the GDA1/CD39 NTPase family. The cofactor is Ca(2+). The N-terminus is blocked.

The protein resides in the membrane. The catalysed reaction is a ribonucleoside 5'-triphosphate + 2 H2O = a ribonucleoside 5'-phosphate + 2 phosphate + 2 H(+). Catalyzes the hydrolysis of phosphoanhydride bonds of nucleoside tri- and di-phosphates. The polypeptide is Apyrase (RROP1) (Solanum tuberosum (Potato)).